The following is a 71-amino-acid chain: Small ribosomal subunit protein bS21 (71 aa).

Positions 47–71 are disordered; it reads RENATRAKRHAKRVARENARNTRLY. Positions 60–71 are enriched in basic and acidic residues; sequence VARENARNTRLY.

The protein belongs to the bacterial ribosomal protein bS21 family.

This Histophilus somni (strain 129Pt) (Haemophilus somnus) protein is Small ribosomal subunit protein bS21.